We begin with the raw amino-acid sequence, 448 residues long: Trigger factor (448 aa).

The PPIase FKBP-type domain maps to 172–257 (GDRVTVDFVG…MKKIEWPHLP (86 aa)).

The protein belongs to the FKBP-type PPIase family. Tig subfamily.

The protein localises to the cytoplasm. The enzyme catalyses [protein]-peptidylproline (omega=180) = [protein]-peptidylproline (omega=0). Its function is as follows. Involved in protein export. Acts as a chaperone by maintaining the newly synthesized protein in an open conformation. Functions as a peptidyl-prolyl cis-trans isomerase. This Paraburkholderia phymatum (strain DSM 17167 / CIP 108236 / LMG 21445 / STM815) (Burkholderia phymatum) protein is Trigger factor.